The chain runs to 111 residues: Photosystem II reaction center Psb28 protein (111 aa).

The protein belongs to the Psb28 family. Part of the photosystem II complex.

It is found in the cellular thylakoid membrane. This Trichormus variabilis (strain ATCC 29413 / PCC 7937) (Anabaena variabilis) protein is Photosystem II reaction center Psb28 protein.